We begin with the raw amino-acid sequence, 343 residues long: Protein pelota homolog (343 aa).

The protein belongs to the eukaryotic release factor 1 family. Pelota subfamily. In terms of assembly, monomer. A divalent metal cation is required as a cofactor.

The protein resides in the cytoplasm. Functionally, may function in recognizing stalled ribosomes, interact with stem-loop structures in stalled mRNA molecules, and effect endonucleolytic cleavage of the mRNA. May play a role in the release non-functional ribosomes and degradation of damaged mRNAs. Has endoribonuclease activity. The chain is Protein pelota homolog from Cenarchaeum symbiosum (strain A).